A 277-amino-acid chain; its full sequence is MGRYNLTALRVRRTALATTQCGKPGTRQPWLDVLADIPPASILVRNQAPSHPVVKQRMRTVPGKSKPQLEIKSSAGRKQTSKKPSRIFQPKEIRYEEDQLRKEFFRDHPWELARPRVVLENDGNDHRRYNWQNIQQPGKKLDGESVVQRQLYLLNNVPDMSKGAAYEIARREFYQLRLQEDVERRVAQEEALATGAYFGPDMHTVGMELENQEYEKWKVWAEGENQAMEQRLAAFTGSTGPTEESGESEDEIPLIEEEDAIGASEESETEAPSGPPI.

Disordered stretches follow at residues 48 to 85 and 232 to 277; these read APSH…KKPS and LAAF…GPPI. A compositionally biased stretch (acidic residues) spans 244–269; sequence ESGESEDEIPLIEEEDAIGASEESET.

Belongs to the mitochondrion-specific ribosomal protein mS23 family. As to quaternary structure, component of the mitochondrial small ribosomal subunit.

The protein localises to the mitochondrion. The sequence is that of Small ribosomal subunit protein mS23 (RSM25) from Ajellomyces capsulatus (strain NAm1 / WU24) (Darling's disease fungus).